A 502-amino-acid chain; its full sequence is Aspartyl/glutamyl-tRNA(Asn/Gln) amidotransferase subunit B (502 aa).

This sequence belongs to the GatB/GatE family. GatB subfamily. In terms of assembly, heterotrimer of A, B and C subunits.

The catalysed reaction is L-glutamyl-tRNA(Gln) + L-glutamine + ATP + H2O = L-glutaminyl-tRNA(Gln) + L-glutamate + ADP + phosphate + H(+). It catalyses the reaction L-aspartyl-tRNA(Asn) + L-glutamine + ATP + H2O = L-asparaginyl-tRNA(Asn) + L-glutamate + ADP + phosphate + 2 H(+). Its function is as follows. Allows the formation of correctly charged Asn-tRNA(Asn) or Gln-tRNA(Gln) through the transamidation of misacylated Asp-tRNA(Asn) or Glu-tRNA(Gln) in organisms which lack either or both of asparaginyl-tRNA or glutaminyl-tRNA synthetases. The reaction takes place in the presence of glutamine and ATP through an activated phospho-Asp-tRNA(Asn) or phospho-Glu-tRNA(Gln). This Pseudarthrobacter chlorophenolicus (strain ATCC 700700 / DSM 12829 / CIP 107037 / JCM 12360 / KCTC 9906 / NCIMB 13794 / A6) (Arthrobacter chlorophenolicus) protein is Aspartyl/glutamyl-tRNA(Asn/Gln) amidotransferase subunit B.